Consider the following 502-residue polypeptide: DGEQALQASLSVKEKLQIALCLEKIGVDIMEIGFPISSPGDFKSVQIISKNIKNSRICSLARCVEKDIDAAGEAMSASNSFRIHIFLATSTLHMEYKLKKNFHEIIDMAIFAVKRALRYTDDIEFSCEDASRTTIDNLCRIVEKLIYHGVKTINIPDTVGYTVPNELSYIIKNLLERVPNIHKSIISVHCHDDLGMAVGNSISAIQAGARQIEGTINGIGERAGNTALEEVIMAIKVREDILGVSTNINYKEIYHTSKIISRICNMPIPPNKAIVGSNAFSHSSGIHQDGVLKNRKNYEIIDPSSIGFKKLKLNLTSRSGRAAVKYYMSEMGYKDTDYNIDELYADFLKLADKKGQVFDYDLESLAFISKHPEELEHFCLKFFSVQSISNGLSTASIKLLCGQKLYIESSTTSNGPVDAIYQALNKITNFPIILQKFQLIAKGKGKDALGQVNILIEYKKRKFHGIGLATDFIESSAKAMVNVLNNIWQAEQVNKKLQELKK.

The Mn(2+) site is built by D1, H189, H191, and N225. Residues 1-254 (DGEQALQASL…STNINYKEIY (254 aa)) enclose the Pyruvate carboxyltransferase domain. The segment at 379–502 (CLKFFSVQSI…VNKKLQELKK (124 aa)) is regulatory domain.

Belongs to the alpha-IPM synthase/homocitrate synthase family. LeuA type 1 subfamily. As to quaternary structure, homodimer. Requires Mn(2+) as cofactor.

Its subcellular location is the cytoplasm. The catalysed reaction is 3-methyl-2-oxobutanoate + acetyl-CoA + H2O = (2S)-2-isopropylmalate + CoA + H(+). The protein operates within amino-acid biosynthesis; L-leucine biosynthesis; L-leucine from 3-methyl-2-oxobutanoate: step 1/4. Catalyzes the condensation of the acetyl group of acetyl-CoA with 3-methyl-2-oxobutanoate (2-ketoisovalerate) to form 3-carboxy-3-hydroxy-4-methylpentanoate (2-isopropylmalate). The sequence is that of 2-isopropylmalate synthase from Buchnera aphidicola subsp. Macrosiphoniella ludovicianae.